We begin with the raw amino-acid sequence, 144 residues long: Large ribosomal subunit protein uL15 (144 aa).

The interval 1 to 53 (MRLNTLSPADGSKHAPKRLGRGIGSGLGKTGGRGHKGQNSRSGGGVRRGFEGG) is disordered. Gly residues predominate over residues 21–31 (RGIGSGLGKTG).

Belongs to the universal ribosomal protein uL15 family. In terms of assembly, part of the 50S ribosomal subunit.

Functionally, binds to the 23S rRNA. This chain is Large ribosomal subunit protein uL15, found in Erwinia tasmaniensis (strain DSM 17950 / CFBP 7177 / CIP 109463 / NCPPB 4357 / Et1/99).